The sequence spans 117 residues: Gamma-aminobutyric acid receptor-associated protein-like 1 (117 aa).

A lipid anchor (Phosphatidylethanolamine amidated glycine; alternate) is attached at Gly116. The Phosphatidylserine amidated glycine; alternate moiety is linked to residue Gly116. Residue Lys117 is a propeptide, removed in mature form.

Belongs to the ATG8 family. Interacts with ATG13, OPRK1, RB1CC1 and ULK1. Interacts with TP53INP1 and TP53INP2. Directly interacts with SQSTM1. Interacts with ATG3, ATG7 and MAP15. Interacts with TECPR2. Interacts with TBC1D5. Interacts with MAPK15. Interacts with TRIM5. Interacts with MEFV and TRIM21. Interacts with WDFY3. Interacts with the reticulophagy receptor TEX264. Interacts with UBA5. Interacts with KBTBD6 and KBTBD7; the interaction is direct. Interacts with reticulophagy regulators RETREG1, RETREG2 and RETREG3. Interacts with IRGM. Interacts with DNM2. Interacts with NCOA4 (via C-terminus). Post-translationally, the precursor molecule is cleaved by ATG4 (ATG4A, ATG4B, ATG4C or ATG4D) to expose the glycine at the C-terminus and form the cytosolic form, GABARAPL1-I. The processed form is then activated by APG7L/ATG7, transferred to ATG3 and conjugated to phosphatidylethanolamine (PE) phospholipid to form the membrane-bound form, GABARAPL1-II. During non-canonical autophagy, the processed form is conjugated to phosphatidylserine (PS) phospholipid. ATG4 proteins also mediate the delipidation of PE-conjugated forms required for GABARAPL1 recycling when autophagosomes fuse with lysosomes. In addition, ATG4B and ATG4D mediate delipidation of ATG8 proteins conjugated to PS during non-canonical autophagy. ATG4B constitutes the major protein for proteolytic activation. ATG4D is the main enzyme for delipidation activity.

It is found in the cytoplasmic vesicle. Its subcellular location is the autophagosome. It localises to the cytoplasmic vesicle membrane. The protein resides in the cytoplasm. The protein localises to the cytoskeleton. It is found in the endoplasmic reticulum. Its subcellular location is the golgi apparatus. Its function is as follows. Ubiquitin-like modifier that increases cell-surface expression of kappa-type opioid receptor through facilitating anterograde intracellular trafficking of the receptor. Involved in formation of autophagosomal vacuoles. While LC3s are involved in elongation of the phagophore membrane, the GABARAP/GATE-16 subfamily is essential for a later stage in autophagosome maturation. Through its interaction with the reticulophagy receptor TEX264, participates in the remodeling of subdomains of the endoplasmic reticulum into autophagosomes upon nutrient stress, which then fuse with lysosomes for endoplasmic reticulum turnover. The polypeptide is Gamma-aminobutyric acid receptor-associated protein-like 1 (Bos taurus (Bovine)).